The primary structure comprises 318 residues: Small ribosomal subunit protein mS26 (318 aa).

Residues 295 to 318 (IDSKLNPTSNGAGNNGNNNNTTNL) form a disordered region. The segment covering 300-318 (NPTSNGAGNNGNNNNTTNL) has biased composition (low complexity).

This sequence belongs to the mitochondrion-specific ribosomal protein mS26 family. As to quaternary structure, component of the mitochondrial small ribosomal subunit (mt-SSU). Mature yeast 74S mitochondrial ribosomes consist of a small (37S) and a large (54S) subunit. The 37S small subunit contains a 15S ribosomal RNA (15S mt-rRNA) and 34 different proteins. The 54S large subunit contains a 21S rRNA (21S mt-rRNA) and 46 different proteins.

It is found in the mitochondrion. In terms of biological role, component of the mitochondrial ribosome (mitoribosome), a dedicated translation machinery responsible for the synthesis of mitochondrial genome-encoded proteins, including at least some of the essential transmembrane subunits of the mitochondrial respiratory chain. The mitoribosomes are attached to the mitochondrial inner membrane and translation products are cotranslationally integrated into the membrane. The protein is Small ribosomal subunit protein mS26 (PET123) of Saccharomyces cerevisiae (strain ATCC 204508 / S288c) (Baker's yeast).